The chain runs to 1365 residues: Histone-lysine N-methyltransferase NSD2 (1365 aa).

Phosphothreonine is present on residues Thr-110 and Thr-114. Ser-121 carries the phosphoserine modification. Residues 149–169 (ADVSQSEENEQKSDNKTRRNR) form a disordered region. Ser-172 bears the Phosphoserine mark. In terms of domain architecture, PWWP 1 spans 222–286 (VGDLVWSKVS…FEKSLVAFEG (65 aa)). 3 disordered regions span residues 373–455 (MVDS…RKGD), 513–567 (QSEE…DKTA), and 594–658 (CKPL…SKKS). Position 376 is a phosphoserine (Ser-376). Thr-422 carries the post-translational modification Phosphothreonine. The HMG box DNA-binding region spans 453-521 (KGDSAAQFLV…AQSEEDSGNG (69 aa)). Over residues 552 to 567 (DKHSLRKRETITDKTA) the composition is skewed to basic and acidic residues. The span at 603 to 623 (ASATASSALGFNKSSSPSASL) shows a compositional bias: polar residues. The segment covering 632-648 (PGDEPSESPYESADETQ) has biased composition (acidic residues). PHD-type zinc fingers lie at residues 667–713 (EYVC…CASG), 714–770 (IHSC…CHAS), and 831–875 (VSWC…CRAG). The PWWP 2 domain occupies 880–942 (FQDIIWVKLG…QARVFPYMEG (63 aa)). Residues 1011–1061 (SEIPKCNCKPTDENPCGSDSECLNRMLMFECHPQVCPAGEYCQNQCFTKRQ) enclose the AWS domain. Positions 1016, 1018, 1026, 1032, 1041, 1046, and 1052 each coordinate Zn(2+). One can recognise an SET domain in the interval 1063–1180 (PETKIIKTDG…AGTELTFNYN (118 aa)). S-adenosyl-L-methionine is bound by residues Trp-1075, 1115-1118 (THFY), and 1141-1142 (NH). Cys-1144 contacts Zn(2+). Asn-1186 contributes to the S-adenosyl-L-methionine binding site. The 17-residue stretch at 1187-1203 (EKTVCRCGASNCSGFLG) folds into the Post-SET domain. Position 1191 (Cys-1191) interacts with Zn(2+). Arg-1192 serves as a coordination point for S-adenosyl-L-methionine. 2 residues coordinate Zn(2+): Cys-1193 and Cys-1198. A disordered region spans residues 1206–1232 (PKTSASLSSEEKGKKAKKKTRRRRAKG). Over residues 1219–1230 (KKAKKKTRRRRA) the composition is skewed to basic residues. A PHD-type 4; atypical zinc finger spans residues 1239 to 1286 (EDECFRCGDGGQLVLCDRKFCTKAYHLSCLGLGKRPFGKWECPWHHCD). The interval 1329-1365 (RADSSSSTKTEKPFPESLKSKGKRKKRRCWRRVTDGK) is disordered. Residues 1348-1359 (SKGKRKKRRCWR) are compositionally biased toward basic residues.

It belongs to the class V-like SAM-binding methyltransferase superfamily. Histone-lysine methyltransferase family. SET2 subfamily. In terms of assembly, interacts with HDAC1. Interacts (via PHD-type zinc fingers 1, 2 and 3) with SALL1. Interacts (via PHD-type 1, 2 and 3) with SALL4. Interacts with NANOG. Interacts with OGT. Interacts (via HMG box) with NKX2-5. During B-cell development, expressed in early B2 cell progenitors (pre- and pro-B cells) with a decrease in expression at later stages.

The protein resides in the nucleus. It localises to the chromosome. It catalyses the reaction L-lysyl(36)-[histone H3] + S-adenosyl-L-methionine = N(6)-methyl-L-lysyl(36)-[histone H3] + S-adenosyl-L-homocysteine + H(+). The catalysed reaction is L-lysyl(36)-[histone H3] + 2 S-adenosyl-L-methionine = N(6),N(6)-dimethyl-L-lysyl(36)-[histone H3] + 2 S-adenosyl-L-homocysteine + 2 H(+). Its function is as follows. Histone methyltransferase which specifically dimethylates nucleosomal histone H3 at 'Lys-36' (H3K36me2). Also monomethylates nucleosomal histone H3 at 'Lys-36' (H3K36me) in vitro. Does not trimethylate nucleosomal histone H3 at 'Lys-36' (H3K36me3). However, specifically trimethylates histone H3 at 'Lys-36' (H3K36me3) at euchromatic regions in embryonic stem (ES) cells. By methylating histone H3 at 'Lys-36', involved in the regulation of gene transcription during various biological processes. In ES cells, associates with developmental transcription factors such as SALL1 and represses inappropriate gene transcription mediated by histone deacetylation. During heart development, associates with transcription factor NKX2-5 to repress transcription of NKX2-5 target genes. Plays an essential role in adipogenesis, by regulating expression of genes involved in pre-adipocyte differentiation. During T-cell receptor (TCR) and CD28-mediated T-cell activation, promotes the transcription of transcription factor BCL6 which is required for follicular helper T (Tfh) cell differentiation. During B-cell development, required for the generation of the B1 lineage. During B2 cell activation, may contribute to the control of isotype class switch recombination (CRS), splenic germinal center formation, and the humoral immune response. Plays a role in class switch recombination of the immunoglobulin heavy chain (IgH) locus during B-cell activation. By regulating the methylation of histone H3 at 'Lys-36' and histone H4 at 'Lys-20' at the IgH locus, involved in TP53BP1 recruitment to the IgH switch region and promotes the transcription of IgA. In terms of biological role, histone methyltransferase which specifically dimethylates nucleosomal histone H3 at 'Lys-36' (H3K36me2). Mono-, di- and tri-methylates histone H3 at 'Lys-27' (H3K27me, H3K27me2, H3K27me3). Methylation of histone H3 at 'Lys-27' is controversial. May act as a transcription regulator that binds DNA and suppresses IL5 transcription through HDAC recruitment. This is Histone-lysine N-methyltransferase NSD2 (Nsd2) from Mus musculus (Mouse).